The following is a 293-amino-acid chain: Putative ABC transporter ATP-binding protein AF_0731 (293 aa).

Residues 2–236 (IEAVDLHFCY…RKLGIRSFSL (235 aa)) form the ABC transporter domain. An ATP-binding site is contributed by 34-41 (GRNGAGKT).

It belongs to the ABC transporter superfamily.

It is found in the cell membrane. Its function is as follows. Probably part of an ABC transporter complex. Responsible for energy coupling to the transport system. The sequence is that of Putative ABC transporter ATP-binding protein AF_0731 from Archaeoglobus fulgidus (strain ATCC 49558 / DSM 4304 / JCM 9628 / NBRC 100126 / VC-16).